A 900-amino-acid polypeptide reads, in one-letter code: Protein translocase subunit SecA (900 aa).

ATP contacts are provided by residues glutamine 87, 105 to 109 (GEGKT), and aspartate 510. The disordered stretch occupies residues 857-890 (DSLDSLSDGGSDSADGQEYPKVGRNEPCPCGSGK). Low complexity predominate over residues 860–872 (DSLSDGGSDSADG). Positions 884, 886, 895, and 896 each coordinate Zn(2+).

This sequence belongs to the SecA family. Monomer and homodimer. Part of the essential Sec protein translocation apparatus which comprises SecA, SecYEG and auxiliary proteins SecDF-YajC and YidC. Zn(2+) is required as a cofactor.

It localises to the cell inner membrane. The protein localises to the cytoplasm. It catalyses the reaction ATP + H2O + cellular proteinSide 1 = ADP + phosphate + cellular proteinSide 2.. Functionally, part of the Sec protein translocase complex. Interacts with the SecYEG preprotein conducting channel. Has a central role in coupling the hydrolysis of ATP to the transfer of proteins into and across the cell membrane, serving both as a receptor for the preprotein-SecB complex and as an ATP-driven molecular motor driving the stepwise translocation of polypeptide chains across the membrane. This chain is Protein translocase subunit SecA, found in Marinomonas sp. (strain MWYL1).